A 428-amino-acid chain; its full sequence is Enolase (428 aa).

Gln-163 is a binding site for (2R)-2-phosphoglycerate. Glu-205 (proton donor) is an active-site residue. Residues Asp-242, Glu-285, and Asp-312 each contribute to the Mg(2+) site. Lys-337, Arg-366, Ser-367, and Lys-388 together coordinate (2R)-2-phosphoglycerate. Residue Lys-337 is the Proton acceptor of the active site.

It belongs to the enolase family. The cofactor is Mg(2+).

It is found in the cytoplasm. It localises to the secreted. The protein resides in the cell surface. The enzyme catalyses (2R)-2-phosphoglycerate = phosphoenolpyruvate + H2O. Its pathway is carbohydrate degradation; glycolysis; pyruvate from D-glyceraldehyde 3-phosphate: step 4/5. In terms of biological role, catalyzes the reversible conversion of 2-phosphoglycerate (2-PG) into phosphoenolpyruvate (PEP). It is essential for the degradation of carbohydrates via glycolysis. The chain is Enolase from Nitrosomonas europaea (strain ATCC 19718 / CIP 103999 / KCTC 2705 / NBRC 14298).